The chain runs to 727 residues: Alpha-1,3-galactosidase A (727 aa).

The disordered stretch occupies residues 220–241; it reads ATNRTWRTSNPVFPERHEDHRP. Polar residues predominate over residues 221–230; that stretch reads TNRTWRTSNP. 6 PbH1 repeats span residues 336 to 358, 461 to 483, 484 to 506, 517 to 538, 551 to 572, and 574 to 603; these read KGTV…NIHG, TPTV…LVTT, RRPV…YISS, VRNV…IFFD, HRNV…LSGR, and VGGL…RVGD.

The protein belongs to the glycosyl hydrolase 110 family. A subfamily.

It catalyses the reaction Hydrolysis of terminal, non-reducing branched (1-&gt;3)-alpha-D-galactosidic residues, producing free D-galactose.. The enzyme catalyses Hydrolysis of terminal, non-reducing alpha-D-galactose residues in alpha-D-galactosides, including galactose oligosaccharides, galactomannans and galactolipids.. Its function is as follows. Alpha-galactosidase that specifically removes branched alpha-1,3-linked galactose residues present in blood group B antigens. Has no activity toward linear alpha-1,3-linked galactose residues. The sequence is that of Alpha-1,3-galactosidase A (glaA) from Peterkaempfera griseoplana (Streptacidiphilus griseoplanus).